The following is a 73-amino-acid chain: Methionyl-tRNA formyltransferase (73 aa).

This sequence belongs to the Fmt family.

It carries out the reaction L-methionyl-tRNA(fMet) + (6R)-10-formyltetrahydrofolate = N-formyl-L-methionyl-tRNA(fMet) + (6S)-5,6,7,8-tetrahydrofolate + H(+). In terms of biological role, attaches a formyl group to the free amino group of methionyl-tRNA(fMet). The formyl group appears to play a dual role in the initiator identity of N-formylmethionyl-tRNA by promoting its recognition by IF2 and preventing the misappropriation of this tRNA by the elongation apparatus. The polypeptide is Methionyl-tRNA formyltransferase (fmt) (Rickettsia akari).